Consider the following 465-residue polypeptide: Kynureninase (465 aa).

Residues Leu133, Thr134, 161–164, Ser217, Asp246, His249, and Tyr271 each bind pyridoxal 5'-phosphate; that span reads FPSD. N6-(pyridoxal phosphate)lysine is present on Lys272. Pyridoxal 5'-phosphate is bound by residues Trp302 and Asn330.

It belongs to the kynureninase family. In terms of assembly, homodimer. Requires pyridoxal 5'-phosphate as cofactor.

It is found in the cytoplasm. It carries out the reaction L-kynurenine + H2O = anthranilate + L-alanine + H(+). It catalyses the reaction 3-hydroxy-L-kynurenine + H2O = 3-hydroxyanthranilate + L-alanine + H(+). It functions in the pathway amino-acid degradation; L-kynurenine degradation; L-alanine and anthranilate from L-kynurenine: step 1/1. Its pathway is cofactor biosynthesis; NAD(+) biosynthesis; quinolinate from L-kynurenine: step 2/3. Its function is as follows. Catalyzes the cleavage of L-kynurenine (L-Kyn) and L-3-hydroxykynurenine (L-3OHKyn) into anthranilic acid (AA) and 3-hydroxyanthranilic acid (3-OHAA), respectively. The polypeptide is Kynureninase (Nematostella vectensis (Starlet sea anemone)).